The chain runs to 203 residues: ATP-dependent Clp protease proteolytic subunit 2 (203 aa).

Catalysis depends on serine 100, which acts as the Nucleophile. Histidine 125 is an active-site residue.

This sequence belongs to the peptidase S14 family. As to quaternary structure, fourteen ClpP subunits assemble into 2 heptameric rings which stack back to back to give a disk-like structure with a central cavity, resembling the structure of eukaryotic proteasomes.

It is found in the cytoplasm. It carries out the reaction Hydrolysis of proteins to small peptides in the presence of ATP and magnesium. alpha-casein is the usual test substrate. In the absence of ATP, only oligopeptides shorter than five residues are hydrolyzed (such as succinyl-Leu-Tyr-|-NHMec, and Leu-Tyr-Leu-|-Tyr-Trp, in which cleavage of the -Tyr-|-Leu- and -Tyr-|-Trp bonds also occurs).. Cleaves peptides in various proteins in a process that requires ATP hydrolysis. Has a chymotrypsin-like activity. Plays a major role in the degradation of misfolded proteins. This Nocardia farcinica (strain IFM 10152) protein is ATP-dependent Clp protease proteolytic subunit 2.